Consider the following 392-residue polypeptide: G2/mitotic-specific cyclin-B (392 aa).

It belongs to the cyclin family. Cyclin AB subfamily.

Essential for the control of the cell cycle at the G2/M (mitosis) transition. Interacts with the CDC2 protein kinase to form MPF. G2/M cyclins accumulate steadily during G2 and are abruptly destroyed at mitosis. In Hydra viridissima (Green hydra), this protein is G2/mitotic-specific cyclin-B.